The chain runs to 229 residues: Triosephosphate isomerase (229 aa).

16 to 18 (NFK) provides a ligand contact to substrate. Residue His100 is the Electrophile of the active site. The active-site Proton acceptor is the Glu148. Substrate-binding positions include Ile153, Gly188, and 209 to 210 (AS).

It belongs to the triosephosphate isomerase family. Homotetramer; dimer of dimers.

Its subcellular location is the cytoplasm. The enzyme catalyses D-glyceraldehyde 3-phosphate = dihydroxyacetone phosphate. The protein operates within carbohydrate biosynthesis; gluconeogenesis. Its pathway is carbohydrate degradation; glycolysis; D-glyceraldehyde 3-phosphate from glycerone phosphate: step 1/1. Functionally, involved in the gluconeogenesis. Catalyzes stereospecifically the conversion of dihydroxyacetone phosphate (DHAP) to D-glyceraldehyde-3-phosphate (G3P). In Methanothermobacter thermautotrophicus (strain ATCC 29096 / DSM 1053 / JCM 10044 / NBRC 100330 / Delta H) (Methanobacterium thermoautotrophicum), this protein is Triosephosphate isomerase.